The following is a 393-amino-acid chain: Lipid-A-disaccharide synthase (393 aa).

It belongs to the LpxB family.

It carries out the reaction a lipid X + a UDP-2-N,3-O-bis[(3R)-3-hydroxyacyl]-alpha-D-glucosamine = a lipid A disaccharide + UDP + H(+). The protein operates within bacterial outer membrane biogenesis; LPS lipid A biosynthesis. Condensation of UDP-2,3-diacylglucosamine and 2,3-diacylglucosamine-1-phosphate to form lipid A disaccharide, a precursor of lipid A, a phosphorylated glycolipid that anchors the lipopolysaccharide to the outer membrane of the cell. This is Lipid-A-disaccharide synthase from Colwellia psychrerythraea (strain 34H / ATCC BAA-681) (Vibrio psychroerythus).